Reading from the N-terminus, the 153-residue chain is Transcriptional repressor NrdR (153 aa).

Residues 3–34 fold into a zinc finger; sequence CPFCGHLEDRVIDSRAGGAGEVIRRRRECASC. An ATP-cone domain is found at 49 to 139; it reads PTVVKKDGRR…VYRSFRDIDQ (91 aa).

Belongs to the NrdR family. Zn(2+) is required as a cofactor.

Its function is as follows. Negatively regulates transcription of bacterial ribonucleotide reductase nrd genes and operons by binding to NrdR-boxes. The chain is Transcriptional repressor NrdR from Sorangium cellulosum (strain So ce56) (Polyangium cellulosum (strain So ce56)).